Reading from the N-terminus, the 577-residue chain is Polyadenylate-binding protein, cytoplasmic and nuclear (577 aa).

Residues 1–10 show a composition bias toward basic and acidic residues; that stretch reads MADITDKTAE. A disordered region spans residues 1–36; it reads MADITDKTAEQLENLNIQDDQKQAATGSESQSVENS. Residue A2 is modified to N-acetylalanine. A Glycyl lysine isopeptide (Lys-Gly) (interchain with G-Cter in ubiquitin) cross-link involves residue K7. The segment at 9–61 is required and sufficient for nuclear export; that stretch reads AEQLENLNIQDDQKQAATGSESQSVENSSASLYVGDLEPSVSEAHLYDIFSPI. Polar residues predominate over residues 11–27; that stretch reads QLENLNIQDDQKQAATG. The Nuclear export signal signature appears at 12–17; the sequence is LENLNI. RRM domains follow at residues 38-116, 126-203, 219-296, and 322-399; these read ASLY…WSQR, GNIF…PHLS, TNLY…RAQK, and VNLF…IAQR. The residue at position 107 (R107) is an Omega-N-methylarginine. S249 carries the post-translational modification Phosphoserine. The segment at 281–317 is required and sufficient for nuclear import; that stretch reads DSELNGEKLYVGRAQKKNERMHVLKKQYEAYRLEKMA. S332 bears the Phosphoserine mark. A Glycyl lysine isopeptide (Lys-Gly) (interchain with G-Cter in ubiquitin) cross-link involves residue K337. Residue S405 is modified to Phosphoserine. The tract at residues 473 to 577 is interaction with SUP35; the sequence is PPQFRNGPVY…KEQEQQTEQA (105 aa). One can recognise a PABC domain in the interval 489-568; that stretch reads GFPRNANDNN…ASAAYESFKK (80 aa).

It belongs to the polyadenylate-binding protein type-1 family. As to quaternary structure, binds to poly(A) mRNA to form a periodic structure with a packing density of one molecule per 25 adenylate residues. Interacts with the nuclear export factor CRM1 and with the importin SXM1. Interacts with RNA15, a component of the cleavage factor IA (CFIA) complex. Interacts with translation initiation factor eIF4G (TIF4631 or TIF4632) and release factor eRF3 (SUP35). Interacts with the PAB-dependent poly(A)-nuclease (PAN) complex regulatory subunit PAN3. Interacts with ARF1, DCP1, PBP1, the Hsp70 chaperone SSA1, and TPA1. Interacts with PAT1 in an RNA-dependent manner.

It localises to the cytoplasm. It is found in the nucleus. In terms of biological role, binds the poly(A) tail of mRNA. Appears to be an important mediator of the multiple roles of the poly(A) tail in mRNA biogenesis, stability and translation. In the nucleus, interacts with the nuclear cleavage factor IA (CFIA), which is required for both mRNA cleavage and polyadenylation. Is also required for efficient mRNA export to the cytoplasm. Acts in concert with a poly(A)-specific nuclease (PAN) to affect poly(A) tail shortening, which may occur concomitantly with either nucleocytoplasmic mRNA transport or translational initiation. Regulates PAN activity via interaction with the stimulator PAN3 or the inhibitor PBP1. In the cytoplasm, affects both translation and mRNA decay. Stimulates translation by interaction with translation initiation factor eIF4G, a subunit of the cap-binding complex eIF4F, bringing the 5'- and 3'-ends of the mRNA in proximity. The formation of this circular mRNP structure appears to be critical for the synergistic effects of the cap and the poly(A) tail in facilitating translation initiation, recycling of ribosomes, and mRNA stability. Also regulates translation termination by recruiting eukaryotic release factor 3 (eRF3). Interaction with eRF3 is also required for regulation of normal mRNA decay through translation termination-coupled poly(A) shortening, probably mediated by PAN. Loss of PAB1 from the mRNP after deadenylation triggers mRNA degradation. Inhibits the major cytoplasmic mRNA deadenylase CCR4-NOT complex. Is also associated peripherally with COPI vesicles through its interaction with ARF1, and this is required for correct localization of the asymmetrically distributed ASH1 mRNA. This Saccharomyces cerevisiae (strain ATCC 204508 / S288c) (Baker's yeast) protein is Polyadenylate-binding protein, cytoplasmic and nuclear (PAB1).